The chain runs to 351 residues: Glycerol-1-phosphate dehydrogenase [NAD(P)+] (351 aa).

NAD(+) is bound by residues 93–97 (GKVLD) and 115–118 (TTAS). Residue D120 coordinates substrate. An NAD(+)-binding site is contributed by S124. D167 serves as a coordination point for substrate. 2 residues coordinate Zn(2+): D167 and H247. A substrate-binding site is contributed by H251. Residue H263 coordinates Zn(2+).

It belongs to the glycerol-1-phosphate dehydrogenase family. Zn(2+) serves as cofactor.

Its subcellular location is the cytoplasm. It catalyses the reaction sn-glycerol 1-phosphate + NAD(+) = dihydroxyacetone phosphate + NADH + H(+). The enzyme catalyses sn-glycerol 1-phosphate + NADP(+) = dihydroxyacetone phosphate + NADPH + H(+). It functions in the pathway membrane lipid metabolism; glycerophospholipid metabolism. Catalyzes the NAD(P)H-dependent reduction of dihydroxyacetonephosphate (DHAP or glycerone phosphate) to glycerol 1-phosphate (G1P). The G1P thus generated is used as the glycerophosphate backbone of phospholipids in the cellular membranes of Archaea. This Archaeoglobus fulgidus (strain ATCC 49558 / DSM 4304 / JCM 9628 / NBRC 100126 / VC-16) protein is Glycerol-1-phosphate dehydrogenase [NAD(P)+].